A 122-amino-acid chain; its full sequence is Large ribosomal subunit protein uL14 (122 aa).

Belongs to the universal ribosomal protein uL14 family. Part of the 50S ribosomal subunit. Forms a cluster with proteins L3 and L19. In the 70S ribosome, L14 and L19 interact and together make contacts with the 16S rRNA in bridges B5 and B8.

Its function is as follows. Binds to 23S rRNA. Forms part of two intersubunit bridges in the 70S ribosome. In Granulibacter bethesdensis (strain ATCC BAA-1260 / CGDNIH1), this protein is Large ribosomal subunit protein uL14.